The following is a 59-amino-acid chain: Large ribosomal subunit protein uL30 (59 aa).

This sequence belongs to the universal ribosomal protein uL30 family. As to quaternary structure, part of the 50S ribosomal subunit.

The sequence is that of Large ribosomal subunit protein uL30 from Desulfatibacillum aliphaticivorans.